The following is a 308-amino-acid chain: Phenylcoumaran benzylic ether reductase 1 (308 aa).

NADP(+)-binding positions include 11-17 (GGTGYIG), arginine 36, and arginine 45. Catalysis depends on lysine 133, which acts as the Proton acceptor. Arginine 137 contributes to the NADP(+) binding site.

This sequence belongs to the NmrA-type oxidoreductase family. Isoflavone reductase subfamily. In terms of tissue distribution, expressed in apical meristem and cotyledon veins of young seedlings. Expressed in vascular tissues of roots, leaves, stems and petals. Expressed in pollen grains. Expressed at low levels in cauline leaves and siliques.

The enzyme catalyses (-)-dehydrodiconiferyl alcohol + NADPH + H(+) = (S)-isodihydrodehydrodiconiferyl alcohol + NADP(+). It catalyses the reaction (+)-dehydrodiconiferyl alcohol + NADPH + H(+) = (R)-isodihydrodehydrodiconiferyl alcohol + NADP(+). The catalysed reaction is (2R,3S)-dihydrodehydrodiconiferyl alcohol + NADPH + H(+) = (S)-tetrahydrodehydrodiconiferyl alcohol + NADP(+). It carries out the reaction (2S,3R)-dihydrodehydrodiconiferyl alcohol + NADPH + H(+) = (R)-tetrahydrodehydrodiconiferyl alcohol + NADP(+). In terms of biological role, oxidoreductase involved in lignan biosynthesis. Catalyzes the NADPH-dependent reduction of phenylcoumaran benzylic ethers. Converts dehydrodiconiferyl alcohol (DDC) to isodihydrodehydrodiconiferyl alcohol (IDDDC), and dihydrodehydrodiconiferyl alcohol (DDDC) to tetrahydrodehydrodiconiferyl alcohol (TDDC). Plays an important role in the biosynthesis of secondary metabolites. In addition to the 8-5'-linked neolignan DDC, can reduce the 8-8'-linked lignans, pinoresinol, and lariciresinol, but with lower activities. In Arabidopsis thaliana (Mouse-ear cress), this protein is Phenylcoumaran benzylic ether reductase 1.